Here is a 717-residue protein sequence, read N- to C-terminus: Fatty acid oxidation complex subunit alpha (717 aa).

The segment at 1 to 189 (MIYQSPTIEV…KVGAIDAVVA (189 aa)) is enoyl-CoA hydratase/isomerase. Position 296 (D296) interacts with substrate. Positions 311–717 (KKVNSAAVLG…ANNGSYYQQA (407 aa)) are 3-hydroxyacyl-CoA dehydrogenase. NAD(+) contacts are provided by residues M324, D343, 400 to 402 (VVE), K407, and S429. Catalysis depends on H450, which acts as the For 3-hydroxyacyl-CoA dehydrogenase activity. N453 serves as a coordination point for NAD(+). Substrate contacts are provided by N500 and Y660.

The protein in the N-terminal section; belongs to the enoyl-CoA hydratase/isomerase family. This sequence in the C-terminal section; belongs to the 3-hydroxyacyl-CoA dehydrogenase family. Heterotetramer of two alpha chains (FadB) and two beta chains (FadA).

It catalyses the reaction a (3S)-3-hydroxyacyl-CoA + NAD(+) = a 3-oxoacyl-CoA + NADH + H(+). It carries out the reaction a (3S)-3-hydroxyacyl-CoA = a (2E)-enoyl-CoA + H2O. The catalysed reaction is a 4-saturated-(3S)-3-hydroxyacyl-CoA = a (3E)-enoyl-CoA + H2O. The enzyme catalyses (3S)-3-hydroxybutanoyl-CoA = (3R)-3-hydroxybutanoyl-CoA. It catalyses the reaction a (3Z)-enoyl-CoA = a 4-saturated (2E)-enoyl-CoA. It carries out the reaction a (3E)-enoyl-CoA = a 4-saturated (2E)-enoyl-CoA. Its pathway is lipid metabolism; fatty acid beta-oxidation. In terms of biological role, involved in the aerobic and anaerobic degradation of long-chain fatty acids via beta-oxidation cycle. Catalyzes the formation of 3-oxoacyl-CoA from enoyl-CoA via L-3-hydroxyacyl-CoA. It can also use D-3-hydroxyacyl-CoA and cis-3-enoyl-CoA as substrate. This chain is Fatty acid oxidation complex subunit alpha, found in Shewanella halifaxensis (strain HAW-EB4).